The chain runs to 77 residues: DNA-directed RNA polymerase subunit Rpo5 (77 aa).

Belongs to the archaeal Rpo5/eukaryotic RPB5 RNA polymerase subunit family. Part of the RNA polymerase complex.

Its subcellular location is the cytoplasm. It carries out the reaction RNA(n) + a ribonucleoside 5'-triphosphate = RNA(n+1) + diphosphate. In terms of biological role, DNA-dependent RNA polymerase (RNAP) catalyzes the transcription of DNA into RNA using the four ribonucleoside triphosphates as substrates. The protein is DNA-directed RNA polymerase subunit Rpo5 of Methanosphaera stadtmanae (strain ATCC 43021 / DSM 3091 / JCM 11832 / MCB-3).